A 469-amino-acid chain; its full sequence is 3-isopropylmalate dehydratase large subunit (469 aa).

[4Fe-4S] cluster contacts are provided by C347, C407, and C410.

It belongs to the aconitase/IPM isomerase family. LeuC type 1 subfamily. As to quaternary structure, heterodimer of LeuC and LeuD. Requires [4Fe-4S] cluster as cofactor.

The enzyme catalyses (2R,3S)-3-isopropylmalate = (2S)-2-isopropylmalate. The protein operates within amino-acid biosynthesis; L-leucine biosynthesis; L-leucine from 3-methyl-2-oxobutanoate: step 2/4. Catalyzes the isomerization between 2-isopropylmalate and 3-isopropylmalate, via the formation of 2-isopropylmaleate. The sequence is that of 3-isopropylmalate dehydratase large subunit from Sorangium cellulosum (strain So ce56) (Polyangium cellulosum (strain So ce56)).